The following is a 150-amino-acid chain: Ribonuclease K6 (150 aa).

The N-terminal stretch at 1-23 (MVLCFPLLLLLLVLWGPVCLLHA) is a signal peptide. Residue H38 is the Proton acceptor of the active site. Intrachain disulfides connect C46/C104, C60/C114, C78/C129, and C85/C92. Residue N55 is glycosylated (N-linked (GlcNAc...) asparagine). Substrate contacts are provided by residues 61-65 (KHQNT) and K86. N100 carries N-linked (GlcNAc...) asparagine glycosylation. Residue R105 coordinates substrate. H145 serves as the catalytic Proton donor.

Belongs to the pancreatic ribonuclease family. Interacts (via N-terminus) with bacterial lipopolysaccharide (LPS).

The protein localises to the secreted. It localises to the lysosome. It is found in the cytoplasmic granule. Ribonuclease which shows a preference for the pyrimidines uridine and cytosine. Has potent antibacterial activity against a range of Gram-positive and Gram-negative bacteria, including P.aeruginosa, A.baumanii, M.luteus, S.aureus, E.faecalis, E.faecium, S.saprophyticus and E.coli. Causes loss of bacterial membrane integrity, and also promotes agglutination of Gram-negative bacteria. Probably contributes to urinary tract sterility. Bactericidal activity is independent of RNase activity. The sequence is that of Ribonuclease K6 (RNASE6) from Papio hamadryas (Hamadryas baboon).